The sequence spans 148 residues: Putative nickel-responsive regulator (148 aa).

Ni(2+) contacts are provided by H77, H88, H90, and C96.

This sequence belongs to the transcriptional regulatory CopG/NikR family. Ni(2+) serves as cofactor.

In terms of biological role, transcriptional regulator. This is Putative nickel-responsive regulator from Bradyrhizobium diazoefficiens (strain JCM 10833 / BCRC 13528 / IAM 13628 / NBRC 14792 / USDA 110).